The following is a 116-amino-acid chain: Large ribosomal subunit protein uL18 (116 aa).

The protein belongs to the universal ribosomal protein uL18 family. In terms of assembly, part of the 50S ribosomal subunit; part of the 5S rRNA/L5/L18/L25 subcomplex. Contacts the 5S and 23S rRNAs.

Its function is as follows. This is one of the proteins that bind and probably mediate the attachment of the 5S RNA into the large ribosomal subunit, where it forms part of the central protuberance. The sequence is that of Large ribosomal subunit protein uL18 from Pseudomonas aeruginosa (strain UCBPP-PA14).